We begin with the raw amino-acid sequence, 302 residues long: MSDYKLSHLQELEAESIHIIREVAAEFENPVMLYSIGKDSSVMVRLAEKAFAPGKVPFPLMHIDSKWKFKEMIEFRDSYAKKFGWNLIVESNMEAFHAGVGPFTHGSKVHTDLMKTQALLHALDKYKFDAAFGGARRDEEKSRAKERIFSFRDKFHQWDPKNQRPELWDIYNARVHKGESIRVFPLSNWTELDIWQYIRLENIPIVPLYFAKERPCVEIDGNLIMADDDRLPEQYRDQIRMRMVRFRTLGCWPLTGAVESEADTIEKIVEEMMTTTKSERTTRVIDFDQDASMEQKKREGYF.

This sequence belongs to the PAPS reductase family. CysD subfamily. Heterodimer composed of CysD, the smaller subunit, and CysN.

It carries out the reaction sulfate + ATP + H(+) = adenosine 5'-phosphosulfate + diphosphate. It participates in sulfur metabolism; hydrogen sulfide biosynthesis; sulfite from sulfate: step 1/3. With CysN forms the ATP sulfurylase (ATPS) that catalyzes the adenylation of sulfate producing adenosine 5'-phosphosulfate (APS) and diphosphate, the first enzymatic step in sulfur assimilation pathway. APS synthesis involves the formation of a high-energy phosphoric-sulfuric acid anhydride bond driven by GTP hydrolysis by CysN coupled to ATP hydrolysis by CysD. This Parabacteroides distasonis (strain ATCC 8503 / DSM 20701 / CIP 104284 / JCM 5825 / NCTC 11152) protein is Sulfate adenylyltransferase subunit 2.